The sequence spans 429 residues: Serine hydroxymethyltransferase (429 aa).

Residues Leu-128 and 132–134 (GHL) contribute to the (6S)-5,6,7,8-tetrahydrofolate site. N6-(pyridoxal phosphate)lysine is present on Lys-237.

The protein belongs to the SHMT family. Homodimer. The cofactor is pyridoxal 5'-phosphate.

It is found in the cytoplasm. The enzyme catalyses (6R)-5,10-methylene-5,6,7,8-tetrahydrofolate + glycine + H2O = (6S)-5,6,7,8-tetrahydrofolate + L-serine. It participates in one-carbon metabolism; tetrahydrofolate interconversion. The protein operates within amino-acid biosynthesis; glycine biosynthesis; glycine from L-serine: step 1/1. Its function is as follows. Catalyzes the reversible interconversion of serine and glycine with tetrahydrofolate (THF) serving as the one-carbon carrier. This reaction serves as the major source of one-carbon groups required for the biosynthesis of purines, thymidylate, methionine, and other important biomolecules. Also exhibits THF-independent aldolase activity toward beta-hydroxyamino acids, producing glycine and aldehydes, via a retro-aldol mechanism. The chain is Serine hydroxymethyltransferase from Caulobacter vibrioides (strain ATCC 19089 / CIP 103742 / CB 15) (Caulobacter crescentus).